Reading from the N-terminus, the 431-residue chain is Probable amino-acid ABC transporter periplasmic-binding protein y4oP (431 aa).

The signal sequence occupies residues 1-25; sequence MKRRTFTAGLAALPFLGSSLTRAFA.

The protein belongs to the bacterial solute-binding protein 1 family.

It is found in the periplasm. Its function is as follows. Probably part of the binding-protein-dependent transport system y4oPQRS. This system probably transports a sugar-like molecule. This is Probable amino-acid ABC transporter periplasmic-binding protein y4oP from Sinorhizobium fredii (strain NBRC 101917 / NGR234).